An 854-amino-acid polypeptide reads, in one-letter code: Translation initiation factor IF-2 (854 aa).

Positions 61–72 (KNIKTPTAKKPK) are enriched in basic residues. Disordered regions lie at residues 61 to 115 (KNIK…LASA) and 167 to 186 (ESLK…KKES). The span at 73–108 (KENAKDQEKLNESEKKEPKKEESKEQEKQEIIDTHK) shows a compositional bias: basic and acidic residues. The 168-residue stretch at 353–520 (TRAPVITIMG…IVLLQADILE (168 aa)) folds into the tr-type G domain. The G1 stretch occupies residues 362–369 (GHVDHGKT). 362 to 369 (GHVDHGKT) contributes to the GTP binding site. Residues 387 to 391 (GITQH) are G2. The tract at residues 408-411 (DTPG) is G3. Residues 408–412 (DTPGH) and 462–465 (NKMD) contribute to the GTP site. The G4 stretch occupies residues 462–465 (NKMD). Residues 498–500 (SAK) are G5.

Belongs to the TRAFAC class translation factor GTPase superfamily. Classic translation factor GTPase family. IF-2 subfamily.

The protein resides in the cytoplasm. One of the essential components for the initiation of protein synthesis. Protects formylmethionyl-tRNA from spontaneous hydrolysis and promotes its binding to the 30S ribosomal subunits. Also involved in the hydrolysis of GTP during the formation of the 70S ribosomal complex. This Campylobacter jejuni subsp. doylei (strain ATCC BAA-1458 / RM4099 / 269.97) protein is Translation initiation factor IF-2.